A 102-amino-acid chain; its full sequence is UPF0213 protein Spro_0507 (102 aa).

Positions 6–81 (PTWHLYMLRM…KQLSKTQKER (76 aa)) constitute a GIY-YIG domain.

Belongs to the UPF0213 family.

The chain is UPF0213 protein Spro_0507 from Serratia proteamaculans (strain 568).